The primary structure comprises 413 residues: Putative competence-damage inducible protein (413 aa).

Belongs to the CinA family.

The sequence is that of Putative competence-damage inducible protein from Thermoanaerobacter pseudethanolicus (strain ATCC 33223 / 39E) (Clostridium thermohydrosulfuricum).